The chain runs to 427 residues: Tol-Pal system protein TolB (427 aa).

The signal sequence occupies residues 1–23; sequence MKLLKRLVSVFAIVLAVGSNAFA.

The protein belongs to the TolB family. The Tol-Pal system is composed of five core proteins: the inner membrane proteins TolA, TolQ and TolR, the periplasmic protein TolB and the outer membrane protein Pal. They form a network linking the inner and outer membranes and the peptidoglycan layer.

The protein localises to the periplasm. Its function is as follows. Part of the Tol-Pal system, which plays a role in outer membrane invagination during cell division and is important for maintaining outer membrane integrity. The sequence is that of Tol-Pal system protein TolB from Haemophilus influenzae (strain ATCC 51907 / DSM 11121 / KW20 / Rd).